Consider the following 88-residue polypeptide: Small ribosomal subunit protein bS20 (88 aa).

Residues 1–21 (MANTTSAKKATRKIARRTAVN) are disordered.

Belongs to the bacterial ribosomal protein bS20 family.

Its function is as follows. Binds directly to 16S ribosomal RNA. This Sinorhizobium fredii (strain NBRC 101917 / NGR234) protein is Small ribosomal subunit protein bS20.